A 636-amino-acid chain; its full sequence is Transcriptional repressor CTCFL (636 aa).

3 disordered regions span residues 17-38 (KEQK…VQRV), 160-195 (ENPE…DKRE), and 222-257 (LEEQ…PQSF). The span at 160–170 (ENPELTPDLDE) shows a compositional bias: acidic residues. Residues 242–251 (AKPKRRRQTK) show a composition bias toward basic residues. 11 C2H2-type zinc fingers span residues 257-279 (FQCD…IKIH), 285-307 (HLCH…VNTH), 313-336 (HKCR…RYKH), 342-364 (FKCS…IRSH), 370-392 (FQCC…MRTH), 398-421 (YECP…AQKH), 428-451 (YECP…RNLH), 458-480 (MKCR…QRTH), 486-508 (FKCK…MRMH), 514-537 (FSCL…RKYH), and 546-572 (HLCL…DPEH). Residues 562–624 (QRHRKKCDPE…AAGSQSPDHG (63 aa)) form a disordered region. Basic and acidic residues predominate over residues 568–583 (CDPEHETLAPNKDRRP).

Belongs to the CTCF zinc-finger protein family. In terms of assembly, interacts with histones, PRMT7 and SETD1A. Interacts (via N-terminus) with BAG6/BAT3. Testis-specific.

It localises to the cytoplasm. It is found in the nucleus. In terms of biological role, testis-specific DNA binding protein responsible for insulator function, nuclear architecture and transcriptional control, which probably acts by recruiting epigenetic chromatin modifiers. Plays a key role in gene imprinting in male germline, by participating in the establishment of differential methylation at the IGF2/H19 imprinted control region (ICR). Directly binds the unmethylated H19 ICR and recruits the PRMT7 methyltransferase, leading to methylate histone H4 'Arg-3' to form H4R3sme2. This probably leads to recruit de novo DNA methyltransferases at these sites. Seems to act as tumor suppressor. In association with DNMT1 and DNMT3B, involved in activation of BAG1 gene expression by binding to its promoter. Required for dimethylation of H3 lysine 4 (H3K4me2) of MYC and BRCA1 promoters. The sequence is that of Transcriptional repressor CTCFL (Ctcfl) from Mus musculus (Mouse).